Consider the following 360-residue polypeptide: MAQLSLQHIQKIYDNQVHVVKDFNLEIADKEFIVFVGPSGCGKSTTLRMIAGLEEISGGDLLIDGKRMNDVPAKARNIAMVFQNYALYPHMTVYDNMAFGLKMQKIAREVIDERVNWAAQILGLREYLKRKPGALSGGQRQRVALGRAIVREAGVFLMDEPLSNLDAKLRVQMRAEISKLHQKLNTTMIYVTHDQTEAMTMATRIVIMKDGIVQQVGAPKTVYNQPANMFVAGFIGSPAMNFIRGTIDGDKFVTETLKLTIPEEKLAVLKTQESLHKPIVMGIRPEDIHPDAQEENNISAKISVAELTGAEFMLYTTVGGHELVVRAGALNDYHAGENITIHFDMTKCHFFDAETEIAIC.

One can recognise an ABC transporter domain in the interval 4–235; the sequence is LSLQHIQKIY…PANMFVAGFI (232 aa). ATP is bound at residue 37-44; sequence GPSGCGKS.

This sequence belongs to the ABC transporter superfamily.

This is an uncharacterized protein from Escherichia coli O6:K15:H31 (strain 536 / UPEC).